The chain runs to 201 residues: Twin horsetail protein 2 (201 aa).

It is found in the nucleus. Functionally, required for correct meiotic chromosome segregation and recombination. The protein is Twin horsetail protein 2 (tht2) of Schizosaccharomyces pombe (strain 972 / ATCC 24843) (Fission yeast).